The following is a 558-amino-acid chain: Atlastin-1 (558 aa).

Positions 1–29 (MAKSRRDRNSWGGFSEKSSDWSSEEEEPV) are disordered. An N-terminal hypervariable region (HVR) region spans residues 1-34 (MAKSRRDRNSWGGFSEKSSDWSSEEEEPVRKAGP). The Cytoplasmic segment spans residues 1–449 (MAKSRRDRNS…NIFHAARTPA (449 aa)). A phosphoserine mark is found at serine 10, serine 22, and serine 23. The GB1/RHD3-type G domain maps to 64 to 309 (DKEVVAVSVA…LIPWLLSPES (246 aa)). Residues arginine 77, lysine 78, glycine 79, lysine 80, serine 81, phenylalanine 82, glutamine 148, arginine 217, aspartate 218, valine 276, and asparagine 279 each contribute to the GDP site. GTP is bound by residues arginine 77, lysine 78, glycine 79, lysine 80, serine 81, and phenylalanine 82. Serine 81 contributes to the Mg(2+) binding site. 3 residues coordinate GTP: arginine 217, aspartate 218, and valine 276. Residues 347 to 438 (MLQATAEANN…YIQYIKHNDS (92 aa)) are 3HB (three-helix bundle) domain. Lysine 395 is modified (N6-acetyllysine). Positions 412-439 (EFSRRYLQQLESEIDELYIQYIKHNDSK) form a coiled coil. A linker region spans residues 439-447 (KNIFHAART). Residues 450–470 (TLFVVIFITYVIAGVTGFIGL) form a helical membrane-spanning segment. Residue aspartate 471 is a topological domain, lumenal. Residues 472–492 (IIASLCNMIMGLTLITLCTWA) form a helical membrane-spanning segment. Topologically, residues 493 to 558 (YIRYSGEYRE…PTEQPEKKKI (66 aa)) are cytoplasmic. Residues 521 to 558 (NEALYKLYSAAATHRHLYQQAFPAPKSEPTEQPEKKKI) are autoinhibitory domain.

It belongs to the TRAFAC class dynamin-like GTPase superfamily. GB1/RHD3 GTPase family. GB1 subfamily. In terms of assembly, monomeric and homodimeric. The homodimer, transiently formed by two molecules on opposing membranes, is the active form mediating ER membrane fusion. Interacts with REEP1, REEP5, RTN3 and RTN4 (via the transmembrane region); these proteins are involved in endoplasmic reticulum tubular network organization. Interacts with ZFYVE27; both proteins are involved in endoplasmic reticulum tubular network organization. Interacts with ARL6IP1; both proteins are involved in endoplasmic reticulum tubular network organization. Interacts with SPAST; the interaction is direct, could recruit SPAST to Golgi membranes. Interacts (via N-terminal region) with MAP4K4 (via CNH regulatory domain). May interact with TMED2. Interacts with CPT1C. Phosphorylated. Phosphorylation, by different kinases, of the N-terminal hypervariable region (HVR) regulates the ATL1-mediated membrane tethering step. In terms of tissue distribution, detected in brain where it is abundant in lamina V of the cerebral cortex. Also expressed within the hippocampus, mainly in pyramidal neurons in CA1 and CA3. Weakly expressed in the striatum and more robustly in amygdala and several thalamic nuclei. Also detected in several mesopontine nuclei (at protein level).

It is found in the endoplasmic reticulum membrane. Its subcellular location is the golgi apparatus membrane. It localises to the cell projection. The protein resides in the axon. The enzyme catalyses GTP + H2O = GDP + phosphate + H(+). In terms of biological role, atlastin-1 (ATL1) is a membrane-anchored GTPase that mediates the GTP-dependent fusion of endoplasmic reticulum (ER) membranes, maintaining the continuous ER network. It facilitates the formation of three-way junctions where ER tubules intersect. Two atlastin-1 on neighboring ER tubules bind GTP and form loose homodimers through the GB1/RHD3-type G domains and 3HB regions. Upon GTP hydrolysis, the 3HB regions tighten, pulling the membranes together to drive their fusion. After fusion, the homodimer disassembles upon release of inorganic phosphate (Pi). Subsequently, GDP dissociates, resetting the monomers to a conformation ready for a new fusion cycle. May also regulate more or less directly Golgi biogenesis. Indirectly regulates axonal development. The polypeptide is Atlastin-1 (Rattus norvegicus (Rat)).